Here is a 136-residue protein sequence, read N- to C-terminus: Peptide methionine sulfoxide reductase MsrB (136 aa).

One can recognise a MsrB domain in the interval aspartate 9–lysine 136. Residues cysteine 53, cysteine 56, cysteine 102, and cysteine 105 each coordinate Zn(2+). Cysteine 125 serves as the catalytic Nucleophile.

It belongs to the MsrB Met sulfoxide reductase family. Zn(2+) serves as cofactor.

It catalyses the reaction L-methionyl-[protein] + [thioredoxin]-disulfide + H2O = L-methionyl-(R)-S-oxide-[protein] + [thioredoxin]-dithiol. This chain is Peptide methionine sulfoxide reductase MsrB, found in Polaromonas sp. (strain JS666 / ATCC BAA-500).